The primary structure comprises 394 residues: Formate-dependent phosphoribosylglycinamide formyltransferase (394 aa).

N(1)-(5-phospho-beta-D-ribosyl)glycinamide is bound by residues 22 to 23 (EL) and Glu-82. ATP-binding positions include Arg-114, Lys-155, 160–165 (SSGKGQ), 195–198 (EGFV), and Glu-203. One can recognise an ATP-grasp domain in the interval 119-308 (RLAAETLKLP…EFALHVRAIL (190 aa)). Positions 267 and 279 each coordinate Mg(2+). N(1)-(5-phospho-beta-D-ribosyl)glycinamide contacts are provided by residues Asp-286, Lys-357, and 364-365 (RR).

This sequence belongs to the PurK/PurT family. Homodimer.

The catalysed reaction is N(1)-(5-phospho-beta-D-ribosyl)glycinamide + formate + ATP = N(2)-formyl-N(1)-(5-phospho-beta-D-ribosyl)glycinamide + ADP + phosphate + H(+). It participates in purine metabolism; IMP biosynthesis via de novo pathway; N(2)-formyl-N(1)-(5-phospho-D-ribosyl)glycinamide from N(1)-(5-phospho-D-ribosyl)glycinamide (formate route): step 1/1. In terms of biological role, involved in the de novo purine biosynthesis. Catalyzes the transfer of formate to 5-phospho-ribosyl-glycinamide (GAR), producing 5-phospho-ribosyl-N-formylglycinamide (FGAR). Formate is provided by PurU via hydrolysis of 10-formyl-tetrahydrofolate. The polypeptide is Formate-dependent phosphoribosylglycinamide formyltransferase (Tolumonas auensis (strain DSM 9187 / NBRC 110442 / TA 4)).